The following is a 347-amino-acid chain: MRIEEDLKLGFKDVLIRPKRSTLKSRSDVELERQFTFKHSDQSWSGVPIIAANMDTVGTFSMASALASFDILTAVHKHYSVEEWQAFINNSSADVLKHVMVSTGTSDADFEKTKQILDLNPALNFVCIDVANGYSEHFVQFVAKAREAWPTKTICAGNVVTGEMCEELILSGADIVKVGIGPGSVCTTRVKTGVGYPQLSAVIECADAAHGLGGMIVSDGGCTTPGDVAKAFGGGADFVMLGGMLAGHEESGGRIVEENGEKFMLFYGMSSESAMKRHVGGVAEYRAAEGKTVKLPLRGPVENTARDILGGLRSACTYVGASRLKELTKRTTFIRVQEQENRIFNNL.

108 to 131 (ADFEKTKQILDLNPALNFVCIDVA) provides a ligand contact to NADP(+). K(+) contacts are provided by glycine 181 and glycine 183. Cysteine 186 functions as the Thioimidate intermediate in the catalytic mechanism. 216-239 (IVSDGGCTTPGDVAKAFGGGADFV) serves as a coordination point for NADP(+).

It belongs to the IMPDH/GMPR family. GuaC type 1 subfamily. Homotetramer.

It carries out the reaction IMP + NH4(+) + NADP(+) = GMP + NADPH + 2 H(+). Its function is as follows. Catalyzes the irreversible NADPH-dependent deamination of GMP to IMP. It functions in the conversion of nucleobase, nucleoside and nucleotide derivatives of G to A nucleotides, and in maintaining the intracellular balance of A and G nucleotides. The polypeptide is GMP reductase (Shigella boydii serotype 4 (strain Sb227)).